The chain runs to 1002 residues: Calmin (1002 aa).

An actin-binding region spans residues 1–288 (MAAHEWDWFQ…IMTYVAQFLE (288 aa)). The 108-residue stretch at 32-139 (NVQKRTFTRW…LIWNIILFFQ (108 aa)) folds into the Calponin-homology (CH) 1 domain. Over residues 149–168 (RNSPSSSLSPGSGGTDSDSS) the composition is skewed to low complexity. Residues 149 to 180 (RNSPSSSLSPGSGGTDSDSSFPPTPTAERSVA) are disordered. A Calponin-homology (CH) 2 domain is found at 187–291 (RKAIKALLAW…YVAQFLERFP (105 aa)). 2 positions are modified to phosphoserine: Ser-301 and Ser-402. Disordered stretches follow at residues 389-418 (QGGP…GRSN), 500-532 (NNNS…GENT), 581-716 (NKVP…SPPL), and 749-911 (DLKN…DSSI). A compositionally biased stretch (low complexity) spans 396 to 409 (SDISEPSPESSILS). Polar residues predominate over residues 500-509 (NNNSQSSSCN). The segment covering 585–606 (SPHETKPDEDAEAFENHAEKLG) has biased composition (basic and acidic residues). The span at 607–617 (KRSIKSAHKKK) shows a compositional bias: basic residues. 2 stretches are compositionally biased toward basic and acidic residues: residues 618-635 (DSPE…HQDS) and 650-659 (PVDKKPEVHE). At Ser-619 the chain carries Phosphoserine. Positions 681–697 (GVGEELSSSPPSSCVSL) are enriched in low complexity. Thr-699 is modified (phosphothreonine). A phosphoserine mark is found at Ser-713 and Ser-769. A compositionally biased stretch (low complexity) spans 776–794 (GSQSSSSSSVPGESLPSAS). Basic and acidic residues predominate over residues 818-834 (PHEDHQQRETKENDPMD). Residues 835 to 846 (SHQSQESPNLEN) show a composition bias toward polar residues. 2 positions are modified to phosphoserine: Ser-838 and Ser-841. Residues 854–863 (NVTKESISSK) show a composition bias toward basic and acidic residues. Positions 898-910 (YSIPSRTSHSDSS) are enriched in polar residues. At Ser-907 the chain carries Phosphoserine. The chain crosses the membrane as a helical; Anchor for type IV membrane protein span at residues 977 to 997 (MMYFILFLWLLVYCLLLFPQL).

In terms of tissue distribution, widely expressed at intermediate level.

The protein localises to the membrane. The chain is Calmin (CLMN) from Homo sapiens (Human).